Consider the following 253-residue polypeptide: Tryptophan synthase alpha chain (253 aa).

Catalysis depends on proton acceptor residues Glu45 and Asp56.

The protein belongs to the TrpA family. As to quaternary structure, tetramer of two alpha and two beta chains.

It catalyses the reaction (1S,2R)-1-C-(indol-3-yl)glycerol 3-phosphate + L-serine = D-glyceraldehyde 3-phosphate + L-tryptophan + H2O. Its pathway is amino-acid biosynthesis; L-tryptophan biosynthesis; L-tryptophan from chorismate: step 5/5. In terms of biological role, the alpha subunit is responsible for the aldol cleavage of indoleglycerol phosphate to indole and glyceraldehyde 3-phosphate. This Flavobacterium psychrophilum (strain ATCC 49511 / DSM 21280 / CIP 103535 / JIP02/86) protein is Tryptophan synthase alpha chain.